A 553-amino-acid chain; its full sequence is 5'-nucleotidase domain-containing protein 2 (553 aa).

The interval 26–51 is disordered; sequence SSSPSCPGCGPPGPGAHCPSTPRSAP. The active-site Nucleophile is Asp-106. Residues Asp-106, Asp-108, and Asp-391 each coordinate Mg(2+). Asp-108 acts as the Proton donor in catalysis.

Belongs to the 5'(3')-deoxyribonucleotidase family. As to quaternary structure, interacts with tyrosine 3-monooxygenase TH; the interaction results in reduced phosphorylation and decreased catalytic activity of TH. Expressed in eye iridocorneal angle.

The protein resides in the cytoplasm. Its function is as follows. Promotes dephosphorylation of tyrosine 3-monooxygenase TH which decreases TH catalytic activity and leads to reduced synthesis of catecholamines including dopamine, noradrenaline and adrenaline. The exact mechanism of activity is unknown but may act as a phosphatase or promote the activity of phosphatases or may inhibit phosphorylation by acting as a barrier to interfere with protein kinase access. This Rattus norvegicus (Rat) protein is 5'-nucleotidase domain-containing protein 2 (Nt5dc2).